The primary structure comprises 119 residues: Type II secretion system protein I (119 aa).

A propeptide spans 1–5 (leader sequence); that stretch reads MNARG. Position 6 is an N-methylmethionine (Met6). The chain crosses the membrane as a helical span at residues 6–26; the sequence is MTLLEVMVALAVFAIAGLAVM.

It belongs to the GSP I family. In terms of assembly, type II secretion is composed of four main components: the outer membrane complex, the inner membrane complex, the cytoplasmic secretion ATPase and the periplasm-spanning pseudopilus. Interacts with core component ExeG. Cleaved by prepilin peptidase. In terms of processing, methylated by prepilin peptidase at the amino group of the N-terminal methionine once the leader sequence is cleaved by prepilin peptidase.

Its subcellular location is the cell inner membrane. Its function is as follows. Component of the type II secretion system required for the energy-dependent secretion of extracellular factors such as proteases and toxins from the periplasm. Part of the pseudopilus tip complex that is critical for the recognition and binding of secretion substrates. The sequence is that of Type II secretion system protein I (exeI) from Aeromonas hydrophila.